Reading from the N-terminus, the 310-residue chain is Porphobilinogen deaminase (310 aa).

The residue at position 242 (Cys242) is an S-(dipyrrolylmethanemethyl)cysteine.

It belongs to the HMBS family. As to quaternary structure, monomer. Dipyrromethane is required as a cofactor.

The catalysed reaction is 4 porphobilinogen + H2O = hydroxymethylbilane + 4 NH4(+). Its pathway is porphyrin-containing compound metabolism; protoporphyrin-IX biosynthesis; coproporphyrinogen-III from 5-aminolevulinate: step 2/4. Its function is as follows. Tetrapolymerization of the monopyrrole PBG into the hydroxymethylbilane pre-uroporphyrinogen in several discrete steps. This Halorhodospira halophila (strain DSM 244 / SL1) (Ectothiorhodospira halophila (strain DSM 244 / SL1)) protein is Porphobilinogen deaminase.